Here is a 410-residue protein sequence, read N- to C-terminus: Regulator of microtubule dynamics protein 2 (410 aa).

Residues 10–27 (IFGIMVGTAGISLLLLWY) traverse the membrane as a helical segment. Phosphoserine is present on Ser-51. The stretch at 68–110 (FQERQLQILEKLNELLTNMEELKEEIRFLKETVPKLEEYIQDE) forms a coiled coil. Residue Ser-121 is modified to Phosphoserine. Residues 122–131 (PQHRARKRRL) show a composition bias toward basic residues. The segment at 122–151 (PQHRARKRRLPTIQSSATSNSSEEAESEGG) is disordered. Phosphothreonine is present on Thr-139. At Tyr-152 the chain carries Phosphotyrosine. Phosphothreonine occurs at positions 154 and 157.

This sequence belongs to the RMDN family. In terms of assembly, interacts with microtubules.

The protein resides in the membrane. It is found in the cytoplasm. The protein localises to the cytoskeleton. It localises to the spindle. Its subcellular location is the spindle pole. The sequence is that of Regulator of microtubule dynamics protein 2 (RMDN2) from Macaca fascicularis (Crab-eating macaque).